The following is a 627-amino-acid chain: Glucokinase regulatory protein (627 aa).

2 consecutive SIS domains span residues V90–V286 and V320–K499. Beta-D-fructose 1-phosphate is bound by residues T109–S110, E153, and S179–G181. T109 to S110 is a beta-D-fructose 6-phosphate binding site. S179–G181 serves as a coordination point for beta-D-fructose 6-phosphate. The interval A199–V200 is important for interaction with GCK. Position 348 (E348) interacts with beta-D-fructose 1-phosphate. Positions L463–F465 are essential for interaction with GCK. K514 is a binding site for beta-D-fructose 1-phosphate. A beta-D-fructose 6-phosphate-binding site is contributed by K514.

Belongs to the GCKR family. In terms of assembly, interacts (fructose 6-phosphate bound form) with GCK. Detected in liver (at protein level). Not detected in muscle, brain, heart, testis, intestine or spleen.

It localises to the cytoplasm. It is found in the nucleus. The protein resides in the mitochondrion. Functionally, regulates glucokinase (GCK) by forming an inactive complex with this enzyme. Acts by promoting GCK recruitment to the nucleus, possibly to provide a reserve of GCK that can be quickly released in the cytoplasm after a meal. The affinity of GCKR for GCK is modulated by fructose metabolites: GCKR with bound fructose 6-phosphate has increased affinity for GCK, while GCKR with bound fructose 1-phosphate has strongly decreased affinity for GCK and does not inhibit GCK activity. The sequence is that of Glucokinase regulatory protein from Rattus norvegicus (Rat).